Consider the following 101-residue polypeptide: Small ribosomal subunit protein bS18c (101 aa).

The protein belongs to the bacterial ribosomal protein bS18 family. In terms of assembly, part of the 30S ribosomal subunit.

It localises to the plastid. It is found in the chloroplast. This chain is Small ribosomal subunit protein bS18c, found in Oenothera biennis (German evening primrose).